The primary structure comprises 125 residues: Small ribosomal subunit protein uS13 (125 aa).

The disordered stretch occupies residues 92–125 (RRSLPVRGQRTQTNARTRKGKRKTVAGKKKATKK). Positions 107-125 (RTRKGKRKTVAGKKKATKK) are enriched in basic residues.

Belongs to the universal ribosomal protein uS13 family. As to quaternary structure, part of the 30S ribosomal subunit. Forms a loose heterodimer with protein S19. Forms two bridges to the 50S subunit in the 70S ribosome.

Located at the top of the head of the 30S subunit, it contacts several helices of the 16S rRNA. In the 70S ribosome it contacts the 23S rRNA (bridge B1a) and protein L5 of the 50S subunit (bridge B1b), connecting the 2 subunits; these bridges are implicated in subunit movement. Contacts the tRNAs in the A and P-sites. This Chlorobium phaeobacteroides (strain DSM 266 / SMG 266 / 2430) protein is Small ribosomal subunit protein uS13.